We begin with the raw amino-acid sequence, 227 residues long: UPF0758 protein LPC_1989 (227 aa).

The MPN domain occupies 102–225; sequence QLSNTQQTYA…YSIFAENKWV (124 aa). 3 residues coordinate Zn(2+): His173, His175, and Asp186. The short motif at 173–186 is the JAMM motif element; sequence HNHPSGLSDASQQD.

It belongs to the UPF0758 family.

The protein is UPF0758 protein LPC_1989 of Legionella pneumophila (strain Corby).